The primary structure comprises 359 residues: 3-dehydroquinate synthase (359 aa).

Residues 70–75, 105–109, 129–130, K142, K151, and 169–172 contribute to the NAD(+) site; these read DGEQYK, GVIGD, TT, and FYKT. Zn(2+) contacts are provided by E184, H247, and H264.

This sequence belongs to the sugar phosphate cyclases superfamily. Dehydroquinate synthase family. Co(2+) serves as cofactor. Requires Zn(2+) as cofactor. The cofactor is NAD(+).

The protein localises to the cytoplasm. It catalyses the reaction 7-phospho-2-dehydro-3-deoxy-D-arabino-heptonate = 3-dehydroquinate + phosphate. It functions in the pathway metabolic intermediate biosynthesis; chorismate biosynthesis; chorismate from D-erythrose 4-phosphate and phosphoenolpyruvate: step 2/7. Functionally, catalyzes the conversion of 3-deoxy-D-arabino-heptulosonate 7-phosphate (DAHP) to dehydroquinate (DHQ). This is 3-dehydroquinate synthase from Francisella tularensis subsp. holarctica (strain FTNF002-00 / FTA).